The primary structure comprises 322 residues: Arginase-1 (322 aa).

The segment covering 1–12 (MSSKSKSIGIIG) has biased composition (low complexity). Positions 1-26 (MSSKSKSIGIIGAPFSKGQPRGGVEE) are disordered. Position 7 is a phosphoserine (S7). An N6-succinyllysine modification is found at K17. S62 carries the phosphoserine modification. H101, D124, H126, and D128 together coordinate Mn(2+). Substrate contacts are provided by residues 126-130 (HTDIN) and 137-139 (SGN). S163 is modified (phosphoserine). A substrate-binding site is contributed by D183. Residues D232 and D234 each contribute to the Mn(2+) site. The substrate site is built by T246 and E277.

The protein belongs to the arginase family. As to quaternary structure, homotrimer. Interacts with CMTM6. The cofactor is Mn(2+).

The protein localises to the cytoplasm. The catalysed reaction is L-arginine + H2O = urea + L-ornithine. The protein operates within nitrogen metabolism; urea cycle; L-ornithine and urea from L-arginine: step 1/1. This chain is Arginase-1 (ARG1), found in Oryctolagus cuniculus (Rabbit).